The primary structure comprises 204 residues: CASP-like protein 2U2 (204 aa).

The Cytoplasmic portion of the chain corresponds to 1-36 (MGVLGGDAHVPIGSQVSPGSVVVTNNESFGHRKLLK). Residues 37–57 (GVDFLVRIKAFAFCLAVIVLL) traverse the membrane as a helical segment. The Extracellular portion of the chain corresponds to 58 to 84 (KNNVQTTVIAPGIVLQAKYNNTKAPVS). Asn77 is a glycosylation site (N-linked (GlcNAc...) asparagine). A helical transmembrane segment spans residues 85–105 (LLVLASICCGYAFLQAVVSLL). Residues 106–117 (SFIRDKRVLNNT) are Cytoplasmic-facing. Residues 118 to 138 (VLAWLTFLLDQVLTYLLLGSA) form a helical membrane-spanning segment. Over 139–170 (AATAEAAYIAKRGEDKVQWKAVCGPFKRFCDH) the chain is Extracellular. The helical transmembrane segment at 171–191 (FAATVFLSFIAVIAFAVSAAI) threads the bilayer. At 192–204 (SAYYLFRKSKGFK) the chain is on the cytoplasmic side.

Belongs to the Casparian strip membrane proteins (CASP) family. Homodimer and heterodimers.

The protein resides in the cell membrane. In Selaginella moellendorffii (Spikemoss), this protein is CASP-like protein 2U2.